Here is a 274-residue protein sequence, read N- to C-terminus: tRNA (mnm(5)s(2)U34)-methyltransferase, chloroplastic (274 aa).

Residues 1–50 (MAAGFFQAEMSILSSTLARSYSLPIRKTLMTFDFRIAMQRNPCLRIRRSC) constitute a chloroplast transit peptide. Positions 108, 110, 134, 136, and 166 each coordinate S-adenosyl-L-methionine.

It belongs to the methyltransferase superfamily. MnmM family.

It is found in the plastid. It localises to the chloroplast. It catalyses the reaction 5-aminomethyl-2-thiouridine(34) in tRNA + S-adenosyl-L-methionine = 5-methylaminomethyl-2-thiouridine(34) in tRNA + S-adenosyl-L-homocysteine + H(+). It functions in the pathway tRNA modification. In terms of biological role, involved in the biosynthesis of 5-methylaminomethyl-2-thiouridine (mnm(5)s(2)U) at the wobble position (U34) in tRNA. Catalyzes the transfer of a methyl group from S-adenosyl-L-methionine to nm(5)s(2)U34 to form mnm(5)s(2)U34. The sequence is that of tRNA (mnm(5)s(2)U34)-methyltransferase, chloroplastic from Arabidopsis thaliana (Mouse-ear cress).